Here is a 195-residue protein sequence, read N- to C-terminus: MASSISTGVKFVPEEDNFLQRHVAFFDRNKDGIVYPSETFQGFRAIGCGYLLSAVASVFINIGLSSKTRPGKGFSIWFPIEVKNIHLAKHGSDSGVYDKDGRFVASKFEEIFTKHAHTHRDALTNEELKQLLKANKEPNDRKGWLAGYTEWKVLHYLCKDKNGLLHKDTVRAAYDGSLFEKLEKQRSSKTSKKHP.

The EF-hand domain occupies 14–49 (EEDNFLQRHVAFFDRNKDGIVYPSETFQGFRAIGCG). H22 provides a ligand contact to heme. Residues D27, N29, D31, and E38 each contribute to the Ca(2+) site. The Proline-knot signature appears at 70-79 (PGKGFSIWFP). S177 carries the post-translational modification Phosphoserine.

This sequence belongs to the caleosin family. Homodimer. Heme b is required as a cofactor. Ca(2+) serves as cofactor. Expressed in roots, leaves, stems, shoots, flowers and germinated seeds. Barely detected in dry seeds prior to germination. Preferentially expressed in vascular bundles and in guard cells.

The protein resides in the lipid droplet. The catalysed reaction is RH + ROOH = ROH + ROH.. Its function is as follows. Calcium-binding peroxygenase involved in the degradation of storage lipid in oil bodies. May be involved in the interaction between oil bodies and vacuoles during seed germination. Acts as a negative regulator of abscisic acid responses in non-seed tissues. In Arabidopsis thaliana (Mouse-ear cress), this protein is Probable peroxygenase 4 (PXG4).